An 831-amino-acid polypeptide reads, in one-letter code: MADEIKKENAPKKLSIQRRTKTTVSGTSTTGKSKEVQVEVRKKRTVTTDLERKAQEQAKLKAKEEAEKRAAEEKLAEKAKREAEKAKAEQIKIEKAKAEQAKASKKNVDVEKEKRRAEEAELRRKADELARQKAEEKAQKAAEEAKRYADFDDSDNDNGKLDDYSDYHLTSSYALEAENEEERRNENRGRSKNKVVKAKKGGRDDENGNKNERQSDRRNQKDVKGKGKHAKKASALQQAFTKPAQVAKADVVIGETITVAELAAKMAVKATEIIKTMMKMGEMVTINQVIDQDTAQLVAEEMGHKVILRKENELEEMVMEDRDVNAEKVHRAPVVTIMGHVDHGKTSLLDYIRKAKVAAGEAGGITQHIGAYHVETNDGKMITFLDTPGHAAFTSMRARGAKATDIVVLVVAADDGVMPQTIEAIQHAKAANAPLVVAVNKIDKPEANPDRVEQELLQHEVISEKFGGDVQFVPVSAKKGLGIDDLLEAILLQSEVLELTAVKDGMASGVVIESYLDKGRGPVATILVQSGTLNRGDIVLCGFEYGRVRAMRDENGKDIQSAGPSIPVEVLGLSGVPAAGDEATVVRDEKKAREVALYRQGKFREVKLARQQKAKLENMFSNMAEGDVAELNVIVKADVQGSVEAIVQALHELSTAEVKVKVVGSGVGGITETDATLAAASNAIMVGFNVRADATARRVIENENIDLRYYSIIYELLNEIKAAMSGMLQPEFKQEIIGLAEVRDVFRHPKFGAIAGCMVTEGLVKRNNPIRVLRDNVVIFEGELESLRRFKDDVSEVRSGMECGIGVKNYNDVKVGDQIEVFEVVEVKRAI.

Positions 1-11 (MADEIKKENAP) are enriched in basic and acidic residues. Residues 1–236 (MADEIKKENA…GKHAKKASAL (236 aa)) form a disordered region. Low complexity predominate over residues 22 to 31 (TTVSGTSTTG). 2 stretches are compositionally biased toward basic and acidic residues: residues 49–150 (DLER…RYAD) and 157–166 (DNGKLDDYSD). The segment covering 190-200 (RSKNKVVKAKK) has biased composition (basic residues). Residues 201–225 (GGRDDENGNKNERQSDRRNQKDVKG) show a composition bias toward basic and acidic residues. Residues 330–500 (HRAPVVTIMG…LLQSEVLELT (171 aa)) form the tr-type G domain. The segment at 339 to 346 (GHVDHGKT) is G1. Position 339–346 (339–346 (GHVDHGKT)) interacts with GTP. Residues 364-368 (GITQH) are G2. The G3 stretch occupies residues 386–389 (DTPG). Residues 386-390 (DTPGH) and 440-443 (NKID) each bind GTP. The segment at 440–443 (NKID) is G4. The segment at 476-478 (SAK) is G5.

It belongs to the TRAFAC class translation factor GTPase superfamily. Classic translation factor GTPase family. IF-2 subfamily.

The protein resides in the cytoplasm. One of the essential components for the initiation of protein synthesis. Protects formylmethionyl-tRNA from spontaneous hydrolysis and promotes its binding to the 30S ribosomal subunits. Also involved in the hydrolysis of GTP during the formation of the 70S ribosomal complex. The sequence is that of Translation initiation factor IF-2 from Histophilus somni (strain 2336) (Haemophilus somnus).